Reading from the N-terminus, the 324-residue chain is Elongation factor P--(R)-beta-lysine ligase (324 aa).

75-77 (SPE) contributes to the substrate binding site. ATP-binding positions include 99-101 (RNE) and Asn-108. Position 117 (Tyr-117) interacts with substrate. ATP is bound at residue 243–244 (EL). Glu-250 is a substrate binding site. Gly-299 is a binding site for ATP.

It belongs to the class-II aminoacyl-tRNA synthetase family. EpmA subfamily. Homodimer.

It catalyses the reaction D-beta-lysine + L-lysyl-[protein] + ATP = N(6)-((3R)-3,6-diaminohexanoyl)-L-lysyl-[protein] + AMP + diphosphate + H(+). With EpmB is involved in the beta-lysylation step of the post-translational modification of translation elongation factor P (EF-P). Catalyzes the ATP-dependent activation of (R)-beta-lysine produced by EpmB, forming a lysyl-adenylate, from which the beta-lysyl moiety is then transferred to the epsilon-amino group of a conserved specific lysine residue in EF-P. This chain is Elongation factor P--(R)-beta-lysine ligase, found in Vibrio cholerae serotype O1 (strain ATCC 39315 / El Tor Inaba N16961).